The sequence spans 276 residues: Type II pantothenate kinase (276 aa).

8–15 (DAGGTLTK) is an ATP binding site. The active-site Proton acceptor is Glu76. ATP is bound by residues Thr105, 127-131 (GGTIM), Phe143, and Ser230.

This sequence belongs to the type II pantothenate kinase family. Homodimer.

It is found in the cytoplasm. The catalysed reaction is (R)-pantothenate + ATP = (R)-4'-phosphopantothenate + ADP + H(+). The protein operates within cofactor biosynthesis; coenzyme A biosynthesis; CoA from (R)-pantothenate: step 1/5. Its function is as follows. Catalyzes the phosphorylation of pantothenate (Pan), the first step in CoA biosynthesis. This Bacillus cereus (strain AH820) protein is Type II pantothenate kinase.